We begin with the raw amino-acid sequence, 72 residues long: Translation initiation factor IF-1 (72 aa).

One can recognise an S1-like domain in the interval 1–72; the sequence is MAKDDVIEVE…TRGRITYRYK (72 aa). Position 60 is a phosphotyrosine (Tyr-60).

Belongs to the IF-1 family. As to quaternary structure, component of the 30S ribosomal translation pre-initiation complex which assembles on the 30S ribosome in the order IF-2 and IF-3, IF-1 and N-formylmethionyl-tRNA(fMet); mRNA recruitment can occur at any time during PIC assembly.

The protein resides in the cytoplasm. Functionally, one of the essential components for the initiation of protein synthesis. Stabilizes the binding of IF-2 and IF-3 on the 30S subunit to which N-formylmethionyl-tRNA(fMet) subsequently binds. Helps modulate mRNA selection, yielding the 30S pre-initiation complex (PIC). Upon addition of the 50S ribosomal subunit IF-1, IF-2 and IF-3 are released leaving the mature 70S translation initiation complex. This is Translation initiation factor IF-1 from Geobacillus thermodenitrificans (strain NG80-2).